A 105-amino-acid chain; its full sequence is uncharacterized protein (105 aa).

Helical transmembrane passes span 7–26 (VLSV…WLSL) and 30–52 (VDMT…LISI).

The protein localises to the cell membrane. This is an uncharacterized protein from Archaeoglobus fulgidus (strain ATCC 49558 / DSM 4304 / JCM 9628 / NBRC 100126 / VC-16).